We begin with the raw amino-acid sequence, 484 residues long: Ubiquinone biosynthesis monooxygenase COQ6, mitochondrial (484 aa).

The transit peptide at 1-41 (MLSLAKAKLAVVGIGRQCVAVRTLNGARAVHRSFSSSEHDQ) directs the protein to the mitochondrion.

It belongs to the UbiH/COQ6 family. Component of a multi-subunit COQ enzyme complex, composed of at least coq3, coq4, coq5, coq6, coq7 and coq9. Interacts with coq8b and coq7. FAD is required as a cofactor.

It is found in the mitochondrion inner membrane. It localises to the golgi apparatus. Its subcellular location is the cell projection. It catalyses the reaction a 4-hydroxy-3-(all-trans-polyprenyl)benzoate + 2 reduced [2Fe-2S]-[ferredoxin] + O2 + 2 H(+) = a 3,4-dihydroxy-5-(all-trans-polyprenyl)benzoate + 2 oxidized [2Fe-2S]-[ferredoxin] + H2O. The catalysed reaction is a 2-methoxy-6-(all-trans-polyprenyl)phenol + 2 reduced [2Fe-2S]-[ferredoxin] + O2 + 2 H(+) = a 2-methoxy-6-(all-trans-polyprenyl)benzene-1,4-diol + 2 oxidized [2Fe-2S]-[ferredoxin] + H2O. It participates in cofactor biosynthesis; ubiquinone biosynthesis. FAD-dependent monooxygenase required for two non-consecutive steps during ubiquinone biosynthesis. Required for the C5-ring hydroxylation during ubiquinone biosynthesis by catalyzing the hydroxylation of 4-hydroxy-3-(all-trans-polyprenyl)benzoic acid to 3,4-dihydroxy-5-(all-trans-polyprenyl)benzoic acid. Also acts downstream of coq4, for the C1-hydroxylation during ubiquinone biosynthesis by catalyzing the hydroxylation of 2-methoxy-6-(all-trans-polyprenyl)phenol to 2-methoxy-6-(all-trans-polyprenyl)benzene-1,4-diol. The electrons required for the hydroxylation reaction are funneled indirectly to coq6 from NADPH via a ferredoxin/ferredoxin reductase system. The sequence is that of Ubiquinone biosynthesis monooxygenase COQ6, mitochondrial from Danio rerio (Zebrafish).